Consider the following 254-residue polypeptide: Adenosylcobinamide-GDP ribazoletransferase (254 aa).

Helical transmembrane passes span 27–47 (SSLYWFPVVGLVIGGIVVLFA), 50–70 (GMGAGWPELAAVLALLGGFIL), 104–124 (VGSFGSLALIGVMLFKWICLL), 131–151 (AYGMIAAGVVLSRTAQVLLAA), 170–190 (AGWPHLLVASVSGVVLLFVLL), 194–214 (VVPSSILLFGSVVALFFVGWL), and 233–253 (LVEIAVWFVAALWLKGLFSAI).

It belongs to the CobS family. It depends on Mg(2+) as a cofactor.

Its subcellular location is the cell inner membrane. It carries out the reaction alpha-ribazole + adenosylcob(III)inamide-GDP = adenosylcob(III)alamin + GMP + H(+). The enzyme catalyses alpha-ribazole 5'-phosphate + adenosylcob(III)inamide-GDP = adenosylcob(III)alamin 5'-phosphate + GMP + H(+). It functions in the pathway cofactor biosynthesis; adenosylcobalamin biosynthesis; adenosylcobalamin from cob(II)yrinate a,c-diamide: step 7/7. Functionally, joins adenosylcobinamide-GDP and alpha-ribazole to generate adenosylcobalamin (Ado-cobalamin). Also synthesizes adenosylcobalamin 5'-phosphate from adenosylcobinamide-GDP and alpha-ribazole 5'-phosphate. This Chlorobaculum parvum (strain DSM 263 / NCIMB 8327) (Chlorobium vibrioforme subsp. thiosulfatophilum) protein is Adenosylcobinamide-GDP ribazoletransferase.